The primary structure comprises 430 residues: Serine--tRNA ligase (430 aa).

237 to 239 provides a ligand contact to L-serine; the sequence is TAE. Residue 268 to 270 participates in ATP binding; the sequence is RSE. Position 291 (Glu291) interacts with L-serine. An ATP-binding site is contributed by 355-358; sequence EISS. Ser391 provides a ligand contact to L-serine.

Belongs to the class-II aminoacyl-tRNA synthetase family. Type-1 seryl-tRNA synthetase subfamily. Homodimer. The tRNA molecule binds across the dimer.

It localises to the cytoplasm. It carries out the reaction tRNA(Ser) + L-serine + ATP = L-seryl-tRNA(Ser) + AMP + diphosphate + H(+). The catalysed reaction is tRNA(Sec) + L-serine + ATP = L-seryl-tRNA(Sec) + AMP + diphosphate + H(+). Its pathway is aminoacyl-tRNA biosynthesis; selenocysteinyl-tRNA(Sec) biosynthesis; L-seryl-tRNA(Sec) from L-serine and tRNA(Sec): step 1/1. Functionally, catalyzes the attachment of serine to tRNA(Ser). Is also able to aminoacylate tRNA(Sec) with serine, to form the misacylated tRNA L-seryl-tRNA(Sec), which will be further converted into selenocysteinyl-tRNA(Sec). This chain is Serine--tRNA ligase, found in Citrobacter koseri (strain ATCC BAA-895 / CDC 4225-83 / SGSC4696).